The following is an 88-amino-acid chain: Large ribosomal subunit protein eL37A (88 aa).

Residues C19, C22, C34, and C37 each coordinate Zn(2+). The C4-type zinc-finger motif lies at 19–37 (CNRCGRRSFHVQKKTCSSC).

The protein belongs to the eukaryotic ribosomal protein eL37 family. As to quaternary structure, component of the large ribosomal subunit (LSU). Mature yeast ribosomes consist of a small (40S) and a large (60S) subunit. The 40S small subunit contains 1 molecule of ribosomal RNA (18S rRNA) and 33 different proteins (encoded by 57 genes). The large 60S subunit contains 3 rRNA molecules (25S, 5.8S and 5S rRNA) and 46 different proteins (encoded by 81 genes). Requires Zn(2+) as cofactor.

The protein resides in the cytoplasm. Component of the ribosome, a large ribonucleoprotein complex responsible for the synthesis of proteins in the cell. The small ribosomal subunit (SSU) binds messenger RNAs (mRNAs) and translates the encoded message by selecting cognate aminoacyl-transfer RNA (tRNA) molecules. The large subunit (LSU) contains the ribosomal catalytic site termed the peptidyl transferase center (PTC), which catalyzes the formation of peptide bonds, thereby polymerizing the amino acids delivered by tRNAs into a polypeptide chain. The nascent polypeptides leave the ribosome through a tunnel in the LSU and interact with protein factors that function in enzymatic processing, targeting, and the membrane insertion of nascent chains at the exit of the ribosomal tunnel. This is Large ribosomal subunit protein eL37A from Saccharomyces cerevisiae (strain ATCC 204508 / S288c) (Baker's yeast).